The chain runs to 336 residues: Biotin synthase (336 aa).

The Radical SAM core domain occupies 51–270 (NQVQCNQLLN…IALARIMMPK (220 aa)). Positions 66, 70, and 73 each coordinate [4Fe-4S] cluster. Cysteine 110, cysteine 141, cysteine 201, and arginine 274 together coordinate [2Fe-2S] cluster.

The protein belongs to the radical SAM superfamily. Biotin synthase family. In terms of assembly, homodimer. The cofactor is [4Fe-4S] cluster. It depends on [2Fe-2S] cluster as a cofactor.

It carries out the reaction (4R,5S)-dethiobiotin + (sulfur carrier)-SH + 2 reduced [2Fe-2S]-[ferredoxin] + 2 S-adenosyl-L-methionine = (sulfur carrier)-H + biotin + 2 5'-deoxyadenosine + 2 L-methionine + 2 oxidized [2Fe-2S]-[ferredoxin]. It participates in cofactor biosynthesis; biotin biosynthesis; biotin from 7,8-diaminononanoate: step 2/2. Functionally, catalyzes the conversion of dethiobiotin (DTB) to biotin by the insertion of a sulfur atom into dethiobiotin via a radical-based mechanism. This Rhodopseudomonas palustris (strain ATCC BAA-98 / CGA009) protein is Biotin synthase.